The primary structure comprises 320 residues: Cytochrome f (320 aa).

The first 35 residues, 1–35 (MQTRNTFSWIKEEITRSISVSLMIYIITGASISNA), serve as a signal peptide directing secretion. 4 residues coordinate heme: Y36, C56, C59, and H60. A helical transmembrane segment spans residues 286–306 (VQGLLFFLASIVFAQIFLVLK).

It belongs to the cytochrome f family. As to quaternary structure, the 4 large subunits of the cytochrome b6-f complex are cytochrome b6, subunit IV (17 kDa polypeptide, petD), cytochrome f and the Rieske protein, while the 4 small subunits are PetG, PetL, PetM and PetN. The complex functions as a dimer. Requires heme as cofactor.

It localises to the plastid. The protein localises to the chloroplast thylakoid membrane. Component of the cytochrome b6-f complex, which mediates electron transfer between photosystem II (PSII) and photosystem I (PSI), cyclic electron flow around PSI, and state transitions. This is Cytochrome f from Gossypium hirsutum (Upland cotton).